The chain runs to 621 residues: Chaperone protein HtpG (621 aa).

An a; substrate-binding region spans residues 1 to 341; that stretch reads MSNQEYTFQT…SEDLPLNVSR (341 aa). The segment at 342-547 is b; the sequence is EILQQNKILA…GDEPNAMMAN (206 aa). The tract at residues 548-621 is c; it reads WMRQMGQSVP…RLNSVLLKAL (74 aa).

It belongs to the heat shock protein 90 family. As to quaternary structure, homodimer.

The protein localises to the cytoplasm. In terms of biological role, molecular chaperone. Has ATPase activity. The chain is Chaperone protein HtpG from Helicobacter pylori (strain J99 / ATCC 700824) (Campylobacter pylori J99).